Here is a 271-residue protein sequence, read N- to C-terminus: L-aspartate dehydrogenase (271 aa).

NAD(+) contacts are provided by Ala-124 and Asn-192. His-222 is an active-site residue.

This sequence belongs to the L-aspartate dehydrogenase family.

It carries out the reaction L-aspartate + NADP(+) + H2O = oxaloacetate + NH4(+) + NADPH + H(+). The enzyme catalyses L-aspartate + NAD(+) + H2O = oxaloacetate + NH4(+) + NADH + H(+). It participates in cofactor biosynthesis; NAD(+) biosynthesis; iminoaspartate from L-aspartate (dehydrogenase route): step 1/1. Specifically catalyzes the NAD or NADP-dependent dehydrogenation of L-aspartate to iminoaspartate. The chain is L-aspartate dehydrogenase from Methanococcoides burtonii (strain DSM 6242 / NBRC 107633 / OCM 468 / ACE-M).